Consider the following 568-residue polypeptide: Phosphoribosylaminoimidazole carboxylase (568 aa).

The ATP-grasp domain maps to 110–298; that stretch reads KNHLIKHDVA…QFEAHVRAVT (189 aa). 138–193 is a binding site for ATP; sequence GEKFGYPYMLKSRTLAYDGRGNFVVKDKSYCEKALEFLKDRPLYAEKWCPFTKELA.

This sequence in the C-terminal section; belongs to the AIR carboxylase family. Class I subfamily.

The enzyme catalyses 5-amino-1-(5-phospho-D-ribosyl)imidazole-4-carboxylate + H(+) = 5-amino-1-(5-phospho-beta-D-ribosyl)imidazole + CO2. It functions in the pathway purine metabolism; IMP biosynthesis via de novo pathway; 5-amino-1-(5-phospho-D-ribosyl)imidazole-4-carboxylate from 5-amino-1-(5-phospho-D-ribosyl)imidazole (carboxylase route): step 1/1. This chain is Phosphoribosylaminoimidazole carboxylase (ADE2), found in Candida albicans (strain SC5314 / ATCC MYA-2876) (Yeast).